Consider the following 327-residue polypeptide: MIVLADHHDRQFRYLRLSLTDVCNFRCGYCLPKGQQLDPQRPALLTLPEIRHLIEGFVALGIEKVRLTGGEPTLRSDLVDIVRAVAAVPGIRRVALTSNGWNLRDRLADLQAAGLTQLNLSLDSLDAARFQAITGSSRFEAVMAALEQAIALRLPILKVNAVLLKTLNYPQLSDFVEFVRDRPISIRFIELMQTLDNHDYFQQEFLSGSVLTEQWLAQGWQPIKRDRTAGPAQEYCHPNYQGKLGIIAPYSPNFCQNCNRLRVTSRGALRLCLFGTGEFDLRPWLQHPDQRSQLLEQVQQTLSFKTAGHQLAEANSGDTRNLATYGG.

In terms of domain architecture, Radical SAM core spans histidine 7–alanine 232. Arginine 16 serves as a coordination point for GTP. Positions 23 and 27 each coordinate [4Fe-4S] cluster. Tyrosine 29 provides a ligand contact to S-adenosyl-L-methionine. Cysteine 30 contributes to the [4Fe-4S] cluster binding site. Arginine 66 contributes to the GTP binding site. Glycine 70 provides a ligand contact to S-adenosyl-L-methionine. Threonine 97 provides a ligand contact to GTP. Serine 121 lines the S-adenosyl-L-methionine pocket. Lysine 158 serves as a coordination point for GTP. Methionine 192 contacts S-adenosyl-L-methionine. Residues cysteine 255 and cysteine 258 each coordinate [4Fe-4S] cluster. Arginine 260 to arginine 262 is a GTP binding site. Cysteine 272 contacts [4Fe-4S] cluster.

This sequence belongs to the radical SAM superfamily. MoaA family. As to quaternary structure, monomer and homodimer. The cofactor is [4Fe-4S] cluster.

It catalyses the reaction GTP + AH2 + S-adenosyl-L-methionine = (8S)-3',8-cyclo-7,8-dihydroguanosine 5'-triphosphate + 5'-deoxyadenosine + L-methionine + A + H(+). It functions in the pathway cofactor biosynthesis; molybdopterin biosynthesis. In terms of biological role, catalyzes the cyclization of GTP to (8S)-3',8-cyclo-7,8-dihydroguanosine 5'-triphosphate. In Synechococcus elongatus (strain ATCC 33912 / PCC 7942 / FACHB-805) (Anacystis nidulans R2), this protein is GTP 3',8-cyclase.